A 406-amino-acid polypeptide reads, in one-letter code: Cholinephosphotransferase 1 (406 aa).

Position 2 is an N-acetylalanine (alanine 2). Over 2 to 62 (AAGAGARPAP…LLQWIPLWMA (61 aa)) the chain is Cytoplasmic. A helical transmembrane segment spans residues 63 to 83 (PNSITLLGLAINMLTTLVLIS). Asparagine 64 serves as a coordination point for CDP-choline. The Lumenal segment spans residues 84 to 93 (YCPTVTEEAP). The chain crosses the membrane as a helical span at residues 94 to 118 (YWTYLLCALGLFIYQSLDAIDGKQA). Aspartate 111 and aspartate 114 together coordinate Mg(2+). Arginine 119 is a binding site for CDP-choline. At 119 to 125 (RRTNSCS) the chain is on the cytoplasmic side. A helical membrane pass occupies residues 126–150 (PLGELFDHGCDSLSTVFMAVGASIA). Aspartate 132 provides a ligand contact to Mg(2+). The active-site Proton acceptor is the histidine 133. Residue aspartate 136 coordinates Mg(2+). The Lumenal portion of the chain corresponds to 151–160 (VRLGTHPDWL). Residues 161-179 (FFCSFIGMFMFYCAHWQTY) form a helical membrane-spanning segment. Residues 180 to 190 (VSGVLRFGKVD) are Cytoplasmic-facing. Residues 191–207 (VTEIQIALVIVFVLSTF) form a helical membrane-spanning segment. The Lumenal portion of the chain corresponds to 208–222 (GGATMWDYTIPILEI). Residues 223–248 (KLKILPVLGVVGGAIFSCSNYFHVIL) traverse the membrane as a helical segment. Residues 249–265 (HGGVGKNGSTIAGTSVL) lie on the Cytoplasmic side of the membrane. Residues 266–281 (SPGLHIGIIIILAIMI) traverse the membrane as a helical segment. At 282 to 293 (YKKSATNLFEKH) the chain is on the lumenal side. A helical transmembrane segment spans residues 294–316 (PCLYTLMFGCVFAKVSQKLVIAH). Residues 317–329 (MTKSELYLQDTVF) are Cytoplasmic-facing. Residues 330–339 (IGPGLLFLDQ) form a helical membrane-spanning segment. Residues 340–346 (YFNNFVD) lie on the Lumenal side of the membrane. A helical membrane pass occupies residues 347 to 376 (EYIVLWIAMVISSLDMMRYFSALCLQISRH). Residues 377 to 406 (LHLSIFKTSCHQAPEQVQVLPPKSHQNNMD) lie on the Cytoplasmic side of the membrane.

This sequence belongs to the CDP-alcohol phosphatidyltransferase class-I family. The cofactor is Mg(2+). Mn(2+) serves as cofactor.

Its subcellular location is the golgi apparatus membrane. It carries out the reaction CDP-choline + a 1,2-diacyl-sn-glycerol = a 1,2-diacyl-sn-glycero-3-phosphocholine + CMP + H(+). The catalysed reaction is 1-octadecanoyl-2-(5Z,8Z,11Z,14Z-eicosatetraenoyl)-sn-glycerol + CDP-choline = 1-octadecanoyl-2-(5Z,8Z,11Z,14Z-eicosatetraenoyl)-sn-glycero-3-phosphocholine + CMP + H(+). It catalyses the reaction 1-hexadecanoyl-2-(9Z-octadecenoyl)-sn-glycerol + CDP-choline = 1-hexadecanoyl-2-(9Z-octadecenoyl)-sn-glycero-3-phosphocholine + CMP + H(+). The enzyme catalyses 1-hexadecanoyl-2-(4Z,7Z,10Z,13Z,16Z,19Z-docosahexaenoyl)-sn-glycerol + CDP-choline = 1-hexadecanoyl-2-(4Z,7Z,10Z,13Z,16Z,19Z-docosahexaenoyl)-sn-glycero-3-phosphocholine + CMP + H(+). It carries out the reaction 1,2-dioctanoyl-sn-glycerol + CDP-choline = 1,2-dioctanoyl-sn-glycero-3-phosphocholine + CMP + H(+). Its pathway is phospholipid metabolism; phosphatidylcholine biosynthesis; phosphatidylcholine from phosphocholine: step 2/2. Its function is as follows. Catalyzes the final step of de novo phosphatidylcholine (PC) synthesis, i.e. the transfer of choline phosphate from CDP-choline to the free hydroxyl of a diacylglycerol (DAG), producing a PC. It thereby plays a central role in the formation and maintenance of vesicular membranes. The polypeptide is Cholinephosphotransferase 1 (CHPT1) (Bos taurus (Bovine)).